The chain runs to 353 residues: UDP-3-O-acylglucosamine N-acyltransferase (353 aa).

Catalysis depends on His242, which acts as the Proton acceptor.

The protein belongs to the transferase hexapeptide repeat family. LpxD subfamily. Homotrimer.

The enzyme catalyses a UDP-3-O-[(3R)-3-hydroxyacyl]-alpha-D-glucosamine + a (3R)-hydroxyacyl-[ACP] = a UDP-2-N,3-O-bis[(3R)-3-hydroxyacyl]-alpha-D-glucosamine + holo-[ACP] + H(+). It participates in bacterial outer membrane biogenesis; LPS lipid A biosynthesis. In terms of biological role, catalyzes the N-acylation of UDP-3-O-acylglucosamine using 3-hydroxyacyl-ACP as the acyl donor. Is involved in the biosynthesis of lipid A, a phosphorylated glycolipid that anchors the lipopolysaccharide to the outer membrane of the cell. The chain is UDP-3-O-acylglucosamine N-acyltransferase from Pseudomonas aeruginosa (strain LESB58).